We begin with the raw amino-acid sequence, 432 residues long: Metacaspase-1 (432 aa).

The span at 1–11 (MEVMDHHHHTS) shows a compositional bias: basic residues. 2 disordered regions span residues 1 to 21 (MEVMDHHHHTSSTRPNPTTRR) and 41 to 87 (PQPG…PNAP). The span at 12 to 21 (STRPNPTTRR) shows a compositional bias: low complexity. The segment covering 46–74 (GAPPPQGGYGYPQPPPPQQPYGYSQPPPQ) has biased composition (pro residues). Catalysis depends on residues H223 and C279.

It belongs to the peptidase C14B family.

Involved in cell death (apoptosis). The chain is Metacaspase-1 (casA) from Sclerotinia sclerotiorum (strain ATCC 18683 / 1980 / Ss-1) (White mold).